Here is a 376-residue protein sequence, read N- to C-terminus: Regulatory protein E2 (376 aa).

A transactivation domain region spans residues 1-206 (METLANRLDV…HHAFDPVSST (206 aa)). Residues 211 to 271 (AAGPLCTGDT…TTERASQPLD (61 aa)) are disordered. Composition is skewed to polar residues over residues 218–237 (GDTT…GPQQ) and 246–266 (NWEQ…TERA). Residues 294–376 (CAPVVHLKGD…VILGHMSMFV (83 aa)) form a DNA-binding domain region. Residue lysine 301 forms a Glycyl lysine isopeptide (Lys-Gly) (interchain with G-Cter in SUMO) linkage.

Belongs to the papillomaviridae E2 protein family. Binds DNA as homodimer. Interacts with protein E1; this interaction greatly increases E1 DNA-binding activity. Interacts with protein L1; this interaction enhances E2-dependent replication and transcription activation. Interacts with protein L2; this interaction inhibits E2 transcriptional activity but not DNA replication function E2. Interacts with protein E7; this interaction inhibits E7 oncogenic activity. Interacts with host TAF1; this interaction modulates E2-dependent transcriptional regulation. Interacts with host BRD4; this interaction mediates E2 transcriptional activation function. Additionally, the interaction with host BRD4 on mitotic chromosomes mediates tethering of the viral genome. Interacts with host TOPBP1; this interaction is required for optimal viral DNA replication. Post-translationally, phosphorylated. In terms of processing, sumoylation plays a regulatory role in E2 transcriptional activity.

The protein resides in the host nucleus. Its function is as follows. Plays a role in the initiation of viral DNA replication. A dimer of E2 interacts with a dimer of E1 in order to improve specificity of E1 DNA binding activity. Once the complex recognizes and binds DNA at specific sites, the E2 dimer is removed from DNA. E2 also regulates viral transcription through binding to the E2RE response element (5'-ACCNNNNNNGGT-3') present in multiple copies in the regulatory regions of the viral genome. Activates or represses transcription depending on E2RE's position with regards to proximal promoter elements including the TATA-box. Repression occurs by sterically hindering the assembly of the transcription initiation complex. In Homo sapiens (Human), this protein is Regulatory protein E2.